Reading from the N-terminus, the 21-residue chain is Paulistine (21 aa).

Cysteines 7 and 14 form a disulfide. Thr21 bears the Threonine amide mark.

The protein belongs to the sylv/frat/paul family. Occurs in oxidized and reduced states which are thought to adopt a compact globular and linear structure, respectively.

In terms of biological role, induces transient hyperalgesia and paw edema in mice. Probably exerts its effects via different pathways in an oxidation state-dependent way. The polypeptide is Paulistine (Polybia paulista (Neotropical social wasp)).